The chain runs to 580 residues: Anaphase-promoting complex subunit 7 (580 aa).

TPR repeat units lie at residues 50–83 (IISF…LFKV), 107–140 (YELK…SRGL), 141–175 (DTHL…CPLC), 253–286 (VLEK…DPYY), 321–354 (AETW…KESH), 356–388 (FAHS…SKNI), 390–421 (TARE…SPDY), 422–456 (SKTM…SPHC), 458–490 (DTVL…QETD), and 491–523 (LMHT…NPQY). Residues 539 to 580 (GIDPDQELDQENDDDDQEEGEGENDQEENDDDDNDDDDEYIS) form a disordered region. A compositionally biased stretch (acidic residues) spans 542-580 (PDQELDQENDDDDQEEGEGENDQEENDDDDNDDDDEYIS).

Belongs to the APC7 family. In terms of assembly, the APC/C is composed of at least 13 subunits that stay tightly associated throughout the cell cycle: anapc1, anapc2, anapc3, anapc4, anapc5, anapc6, anapc7, anapc8, anapc10, anapc11, cdc20, cdc26 and cdh1.

The protein localises to the nucleus. Its pathway is protein modification; protein ubiquitination. Component of the anaphase promoting complex/cyclosome (APC/C), a cell cycle-regulated E3 ubiquitin-protein ligase complex that controls progression through mitosis and the G1 phase of the cell cycle. The chain is Anaphase-promoting complex subunit 7 (anapc7) from Dictyostelium discoideum (Social amoeba).